We begin with the raw amino-acid sequence, 1338 residues long: Centrosomal P4.1-associated protein (1338 aa).

The disordered stretch occupies residues 190–211; the sequence is GLSLLPDDQSQKHRSPGNTTTG. Phosphoserine is present on residues S260 and S316. The alpha/beta-tubulin binding stretch occupies residues 319-394; that stretch reads VANIEERPIK…FTNAKSKFQK (76 aa). 3 disordered regions span residues 386–414, 436–479, and 521–551; these read TNAK…PLFK, PILK…QTGK, and QGKD…ESES. The span at 400-409 shows a compositional bias: polar residues; sequence LVTNQSTSED. Position 540 is a phosphoserine (S540). The span at 541–550 shows a compositional bias: basic and acidic residues; that stretch reads PIRETMKESE. Phosphoserine; by PLK2 is present on S589. S595 carries the post-translational modification Phosphoserine; by PLK2 and PLK4. 3 disordered regions span residues 611–789, 845–865, and 1096–1153; these read HRMS…LSLS, VKRG…TSEL, and YLPM…QGEI. A compositionally biased stretch (basic and acidic residues) spans 635-650; it reads NRSEDLDHTAREKESE. Positions 679–689 are enriched in polar residues; sequence QKSTSENQTEW. The span at 717-764 shows a compositional bias: basic and acidic residues; it reads STEDRERGISSREDSPQVCDDKGPFKDTRTQEDKRRDVDLDLSDKDYS. Position 759 is a phosphoserine (S759). An interaction with STIL region spans residues 895 to 1338; that stretch reads QPPGDNARSQ…EGNVLMDTEL (444 aa). Residues 1140–1149 are compositionally biased toward acidic residues; sequence YKEEEEDQDI.

Belongs to the TCP10 family. As to quaternary structure, forms homodimers. Associates with microtubules plus ends; binds to beta-tubulin subunits exposed on microtubule outer surface at its distal tip; also associates with microtubule lattice. Associated with the gamma-tubulin complex. Interacts with the head domain of EPB41. Interacts with LYST. Interacts with CEP152 (via C-terminus). Interacts with STIL. Forms a complex with STIL and SASS6. Post-translationally, phosphorylation at Ser-589 and Ser-595 by PLK2 is required for procentriole formation and centriole elongation. Phosphorylation by PLK2 oscillates during the cell cycle: it increases at G1/S transition and decreases during the exit from mitosis. Phosphorylation at Ser-595 is also mediated by PLK4 but is not a critical step in PLK4 function in procentriole assembly.

The protein localises to the cytoplasm. Its subcellular location is the cytoskeleton. The protein resides in the microtubule organizing center. It localises to the centrosome. It is found in the centriole. Plays an important role in cell division and centrosome function by participating in centriole duplication. Inhibits microtubule nucleation from the centrosome. Involved in the regulation of slow processive growth of centriolar microtubules. Acts as a microtubule plus-end tracking protein that stabilizes centriolar microtubules and inhibits microtubule polymerization and extension from the distal ends of centrioles. Required for centriole elongation and for STIL-mediated centriole amplification. Required for the recruitment of CEP295 to the proximal end of new-born centrioles at the centriolar microtubule wall during early S phase in a PLK4-dependent manner. May be involved in the control of centriolar-microtubule growth by acting as a regulator of tubulin release. This chain is Centrosomal P4.1-associated protein, found in Homo sapiens (Human).